A 269-amino-acid polypeptide reads, in one-letter code: Homocitrate synthase subunit alpha (269 aa).

Residues 3-255 (INIVDTTLRD…IYTGDFEDII (253 aa)) form the Pyruvate carboxyltransferase domain.

The protein belongs to the alpha-IPM synthase/homocitrate synthase family. As to quaternary structure, heterodimer of an alpha and an omega chain.

It carries out the reaction acetyl-CoA + 2-oxoglutarate + H2O = (2R)-homocitrate + CoA + H(+). Functionally, this protein is a Fe-Mo-cofactor biosynthetic component. The sequence is that of Homocitrate synthase subunit alpha (nifV-ALPHA) from Clostridium pasteurianum.